Here is a 503-residue protein sequence, read N- to C-terminus: UDP-N-acetylmuramoylalanine--D-glutamate ligase (503 aa).

129 to 135 (GTNGKTT) provides a ligand contact to ATP.

It belongs to the MurCDEF family.

The protein localises to the cytoplasm. The enzyme catalyses UDP-N-acetyl-alpha-D-muramoyl-L-alanine + D-glutamate + ATP = UDP-N-acetyl-alpha-D-muramoyl-L-alanyl-D-glutamate + ADP + phosphate + H(+). The protein operates within cell wall biogenesis; peptidoglycan biosynthesis. Cell wall formation. Catalyzes the addition of glutamate to the nucleotide precursor UDP-N-acetylmuramoyl-L-alanine (UMA). In Burkholderia cenocepacia (strain HI2424), this protein is UDP-N-acetylmuramoylalanine--D-glutamate ligase.